The following is a 482-amino-acid chain: PAN domain-containing protein At5g03700 (482 aa).

A signal peptide spans 1–31 (MEGLCLNSFTRVLLLLFVFLVFSHKWQRVNA). Positions 330–411 (CDKTTEFKVV…SKLGYFKVRE (82 aa)) constitute a PAN domain. Intrachain disulfides connect Cys-363/Cys-385 and Cys-367/Cys-373. A helical transmembrane segment spans residues 425-445 (GMSLLAVIALVLMVAMVYVGF).

The protein localises to the membrane. In Arabidopsis thaliana (Mouse-ear cress), this protein is PAN domain-containing protein At5g03700.